The chain runs to 68 residues: Kunitz-type serine protease inhibitor PPTI (68 aa).

The residue at position 1 (Glu-1) is a Pyrrolidone carboxylic acid (Glu). In terms of domain architecture, BPTI/Kunitz inhibitor spans 7–57 (CYLPDDPGVCKAHIPRFYYNPASNKCKEFIYGGCGGNANNFETRAECRHTC). 3 cysteine pairs are disulfide-bonded: Cys-7–Cys-57, Cys-16–Cys-40, and Cys-32–Cys-53.

In terms of tissue distribution, expressed by the venom gland.

The protein localises to the secreted. Functionally, serine protease inhibitor that weakly inhibits trypsin (Ki=0.2 uM). May have potassium channel blocking activities. This Pseudocerastes persicus (Persian horned viper) protein is Kunitz-type serine protease inhibitor PPTI.